The chain runs to 382 residues: Cell division protein DivIB (382 aa).

Over 1–103 (MAKDKEKQSD…SATQIAFQKS (103 aa)) the chain is Cytoplasmic. Composition is skewed to basic and acidic residues over residues 36 to 49 (EKKLKEKLLSDKKA) and 60 to 70 (VELKTDEKTDS). Residues 36-92 (EKKLKEKLLSDKKAQQQAQNASEAVELKTDEKTDSQEIESETTSKPKKTKKVRQPKE) are disordered. Residues 104 to 124 (LPVLLGALLLMAVSIFMITPY) traverse the membrane as a helical segment. The POTRA domain maps to 125 to 196 (SKKKEFSVRG…NHFLFNVIEF (72 aa)). Topologically, residues 125–382 (SKKKEFSVRG…PETVLEQAHG (258 aa)) are extracellular. A disordered region spans residues 322–382 (QEIENQPEVP…PETVLEQAHG (61 aa)). Residues 338 to 352 (AADKEGDKPGEHQEQ) show a composition bias toward basic and acidic residues.

It belongs to the FtsQ/DivIB family. DivIB subfamily.

The protein localises to the cell membrane. Its function is as follows. Cell division protein that may be involved in stabilizing or promoting the assembly of the division complex. In Streptococcus pyogenes serotype M2 (strain MGAS10270), this protein is Cell division protein DivIB.